Here is a 482-residue protein sequence, read N- to C-terminus: DNA polymerase II small subunit (482 aa).

It belongs to the DNA polymerase delta/II small subunit family. Heterodimer of a large subunit and a small subunit.

It carries out the reaction DNA(n) + a 2'-deoxyribonucleoside 5'-triphosphate = DNA(n+1) + diphosphate. The enzyme catalyses Exonucleolytic cleavage in the 3'- to 5'-direction to yield nucleoside 5'-phosphates.. In terms of biological role, possesses two activities: a DNA synthesis (polymerase) and an exonucleolytic activity that degrades single-stranded DNA in the 3' to 5' direction. Has a template-primer preference which is characteristic of a replicative DNA polymerase. The protein is DNA polymerase II small subunit (polB) of Methanothermobacter thermautotrophicus (strain ATCC 29096 / DSM 1053 / JCM 10044 / NBRC 100330 / Delta H) (Methanobacterium thermoautotrophicum).